Here is a 132-residue protein sequence, read N- to C-terminus: Small ribosomal subunit protein uS8 (132 aa).

This sequence belongs to the universal ribosomal protein uS8 family. In terms of assembly, part of the 30S ribosomal subunit. Contacts proteins S5 and S12.

One of the primary rRNA binding proteins, it binds directly to 16S rRNA central domain where it helps coordinate assembly of the platform of the 30S subunit. In Psychrobacter arcticus (strain DSM 17307 / VKM B-2377 / 273-4), this protein is Small ribosomal subunit protein uS8.